The chain runs to 868 residues: DNA mismatch repair protein MutS (868 aa).

Residue 620 to 627 participates in ATP binding; that stretch reads GPNMGGKS.

This sequence belongs to the DNA mismatch repair MutS family.

This protein is involved in the repair of mismatches in DNA. It is possible that it carries out the mismatch recognition step. This protein has a weak ATPase activity. The chain is DNA mismatch repair protein MutS from Xylella fastidiosa (strain Temecula1 / ATCC 700964).